The following is a 566-amino-acid chain: MGRAGGGGPDWGPPPVLLLLGVTLVLTAGAVPARETGSAIEAEELVRSSLAWESRANDTREEAGLPAAGEDETSWTERGSEMAAVGPGVGPEEALEASAAVTGTAWLEADGPGLGGVTAEAGSGDAQTLPATLQAPDEALGSSTMPPAIPEATETSGPPSPAVHDKPSVGPELPKEIPLEVRLNLGGSTPEPTFPLQGTLETQPASDIIDIDYFEGLDSEGRGADMGSFPGSPGTSENHPDTEGETPSWSLLDLYDDFTPFDESDFYPTTSFYDDLEEEEEEEEDKDTVGGGDLEDENDLLLPSQKPGVGPGTGQPTNRWHAVPPQHTLGMVPGSSISLRPRPGDPGKDLASGENGTECRVGFVRHNGSCRSVCDLFPSYCHNGGQCYLVENIGAFCRCNTQDYIWHKGMRCESIITDFQVMCVAVGSAALVLLLLFMMTVFFAKKLYLLKTENTKLRRTNKFRTPSELHNDNFSLSTIAEGSHPNVRKFCDTPRVSSPHARALAHYDNIVCQDDPSAPHKIQDPLKSRLKEEESFNIQNSMSPKLEGGKGDQDDLGVNCLQNNLT.

An N-terminal signal peptide occupies residues 1-30; that stretch reads MGRAGGGGPDWGPPPVLLLLGVTLVLTAGA. The Extracellular segment spans residues 31–423; it reads VPARETGSAI…SIITDFQVMC (393 aa). S38 carries O-linked (Xyl...) (chondroitin sulfate) serine glycosylation. The disordered stretch occupies residues 56–93; the sequence is ANDTREEAGLPAAGEDETSWTERGSEMAAVGPGVGPEE. N57 carries an N-linked (GlcNAc...) asparagine glycan. Residue T76 is glycosylated (O-linked (GalNAc...) threonine). The O-linked (Xyl...) (chondroitin sulfate) serine glycan is linked to S123. T132 is a glycosylation site (O-linked (GalNAc...) threonine). Disordered stretches follow at residues 137-173, 218-249, and 263-327; these read DEAL…GPEL, DSEG…TPSW, and ESDF…PPQH. S143 carries an O-linked (GalNAc...) serine glycan. Residues T144, T153, and T155 are each glycosylated (O-linked (GalNAc...) threonine). O-linked (GalNAc...) serine glycans are attached at residues S156 and S160. Residues 163-173 are compositionally biased toward basic and acidic residues; sequence VHDKPSVGPEL. O-linked (GalNAc...) threonine glycosylation is present at T235. The interval 265–301 is interaction with TNC and TNR; that stretch reads DFYPTTSFYDDLEEEEEEEEDKDTVGGGDLEDENDLL. Acidic residues predominate over residues 274 to 286; the sequence is DDLEEEEEEEEDK. N-linked (GlcNAc...) asparagine glycosylation is found at N355 and N367. In terms of domain architecture, EGF-like spans 371–413; sequence RSVCDLFPSYCHNGGQCYLVENIGAFCRCNTQDYIWHKGMRCE. Cystine bridges form between C374-C387, C381-C397, and C399-C412. Phosphoserine occurs at positions 394 and 396. C397 is modified (phosphothreonine). The chain crosses the membrane as a helical span at residues 424–444; sequence VAVGSAALVLLLLFMMTVFFA. The interval 442-460 is interaction with GOPC; that stretch reads FFAKKLYLLKTENTKLRRT. Topologically, residues 445–566 are cytoplasmic; that stretch reads KKLYLLKTEN…GVNCLQNNLT (122 aa). S467, S475, and S477 each carry phosphoserine. T478 bears the Phosphothreonine mark. 2 positions are modified to phosphoserine: S483 and S543. Residues 531-566 are disordered; sequence KEEESFNIQNSMSPKLEGGKGDQDDLGVNCLQNNLT.

As to quaternary structure, binds TNR and probably TNC. Interacts with ERBB3 and GOPC. Interacts with MDK; this interaction is independent of the presence of chondroitin sulfate chains and promotes elongation of oligodendroglial precursor-like cells. N-glycosylated. In terms of processing, O-glycosylated; contains chondroitin sulfate glycans. Part-time proteoglycan, expressed in part as a proteoglycan exhibiting chondroitin sulfate glycans and in part as a non-proteoglycan form. The relative amount of both forms depends on tissues and tissue maturation. In the cerebellum the 2 forms coexist while in the cerebrum the proteoglycan form is predominant. Post-translationally, phosphorylated; in intracellular and extracellular parts. In terms of tissue distribution, expressed in olfactory bulb, hippocampus, brain stem, spinal cord, cerebrum and cerebellum. Expressed by Purkinje cells in the cerebellum (at protein level). Expressed in immature and mature cerebellum (isoform 1, isoform 2 and isoform 3).

It is found in the cell membrane. Its subcellular location is the synaptic cell membrane. It localises to the endoplasmic reticulum membrane. The protein resides in the golgi apparatus membrane. The protein localises to the cell surface. It is found in the secreted. In terms of biological role, may function as a growth and differentiation factor involved in neuritogenesis. May induce ERBB3 activation. This chain is Chondroitin sulfate proteoglycan 5 (Cspg5), found in Mus musculus (Mouse).